Reading from the N-terminus, the 403-residue chain is Chromatin structure-remodeling complex subunit rsc58 (403 aa).

Low complexity predominate over residues 376–389 (SLSMNGSLSPSSTN). A disordered region spans residues 376-403 (SLSMNGSLSPSSTNVPLQSYRRTTKSRR). Serine 384 carries the phosphoserine modification.

Component of the RSC complex composed of at least arp9, arp42, rsc1, rsc4, rsc7, rsc9, rsc58, sfh1, snf21, ssr1, ssr2, ssr3 and ssr4. The complex interacts with histone and histone variant components of centromeric chromatin.

Its subcellular location is the cytoplasm. The protein resides in the nucleus. Component of the chromatin structure remodeling complex (RSC), which is involved in transcription regulation and nucleosome positioning. Controls particularly membrane and organelle development genes. The chain is Chromatin structure-remodeling complex subunit rsc58 (rsc58) from Schizosaccharomyces pombe (strain 972 / ATCC 24843) (Fission yeast).